Reading from the N-terminus, the 373-residue chain is Probable ethanolamine permease EutH (373 aa).

Transmembrane regions (helical) follow at residues 5–25 (EIII…KIIG), 38–58 (IMAM…APVL), 61–81 (ILSP…AMFA), 111–131 (ILGS…LGII), 143–163 (VLSG…VAGF), 166–186 (IMIF…MLGL), 197–217 (FTIF…AGAI), 236–256 (IEIV…VFVI), 307–327 (VAFA…TAGV), and 331–351 (MIFP…AVGI).

Belongs to the EutH family.

It localises to the cell membrane. It catalyses the reaction ethanolamine(in) = ethanolamine(out). Its function is as follows. Probably involved in the diffusion of protonated ethanolamine (EA) into the cell at low pH. At low pH most EA is protonated, and this permease becomes necessary. Contributes to bacterial survival and replication in acidic macrophage vacuoles, but not to bacterial uptake by macrophages. This chain is Probable ethanolamine permease EutH, found in Listeria monocytogenes serotype 1/2a (strain 10403S).